Here is a 235-residue protein sequence, read N- to C-terminus: Large ribosomal subunit protein uL1 (235 aa).

This sequence belongs to the universal ribosomal protein uL1 family. Part of the 50S ribosomal subunit.

Its function is as follows. Binds directly to 23S rRNA. The L1 stalk is quite mobile in the ribosome, and is involved in E site tRNA release. Functionally, protein L1 is also a translational repressor protein, it controls the translation of the L11 operon by binding to its mRNA. The polypeptide is Large ribosomal subunit protein uL1 (Rhodospirillum centenum (strain ATCC 51521 / SW)).